Here is a 262-residue protein sequence, read N- to C-terminus: Acyl-[acyl-carrier-protein]--UDP-N-acetylglucosamine O-acyltransferase (262 aa).

The protein belongs to the transferase hexapeptide repeat family. LpxA subfamily. Homotrimer.

It localises to the cytoplasm. The catalysed reaction is a (3R)-hydroxyacyl-[ACP] + UDP-N-acetyl-alpha-D-glucosamine = a UDP-3-O-[(3R)-3-hydroxyacyl]-N-acetyl-alpha-D-glucosamine + holo-[ACP]. It functions in the pathway glycolipid biosynthesis; lipid IV(A) biosynthesis; lipid IV(A) from (3R)-3-hydroxytetradecanoyl-[acyl-carrier-protein] and UDP-N-acetyl-alpha-D-glucosamine: step 1/6. In terms of biological role, involved in the biosynthesis of lipid A, a phosphorylated glycolipid that anchors the lipopolysaccharide to the outer membrane of the cell. In Paraburkholderia xenovorans (strain LB400), this protein is Acyl-[acyl-carrier-protein]--UDP-N-acetylglucosamine O-acyltransferase.